Here is a 175-residue protein sequence, read N- to C-terminus: Secretion monitor (175 aa).

The first 38 residues, 1–38, serve as a signal peptide directing secretion; that stretch reads MSIINFWRQFGRRYFWSHLLLGMVAAGIGMPSLVSAHA.

The protein belongs to the SecM family.

Its subcellular location is the cytoplasm. The protein localises to the cytosol. The protein resides in the periplasm. Functionally, regulates secA expression by translational coupling of the secM secA operon. Translational pausing at a specific Pro residue 5 residues before the end of the protein may allow disruption of a mRNA repressor helix that normally suppresses secA translation initiation. The sequence is that of Secretion monitor from Proteus mirabilis (strain HI4320).